The primary structure comprises 643 residues: 1-deoxy-D-xylulose-5-phosphate synthase (643 aa).

Residues His-78 and 119 to 121 (AHS) contribute to the thiamine diphosphate site. Asp-150 serves as a coordination point for Mg(2+). Thiamine diphosphate contacts are provided by residues 151-152 (GS), Asn-179, Tyr-288, and Glu-370. Residue Asn-179 participates in Mg(2+) binding.

The protein belongs to the transketolase family. DXPS subfamily. In terms of assembly, homodimer. It depends on Mg(2+) as a cofactor. Requires thiamine diphosphate as cofactor.

It carries out the reaction D-glyceraldehyde 3-phosphate + pyruvate + H(+) = 1-deoxy-D-xylulose 5-phosphate + CO2. It participates in metabolic intermediate biosynthesis; 1-deoxy-D-xylulose 5-phosphate biosynthesis; 1-deoxy-D-xylulose 5-phosphate from D-glyceraldehyde 3-phosphate and pyruvate: step 1/1. Its function is as follows. Catalyzes the acyloin condensation reaction between C atoms 2 and 3 of pyruvate and glyceraldehyde 3-phosphate to yield 1-deoxy-D-xylulose-5-phosphate (DXP). In Brucella abortus (strain 2308), this protein is 1-deoxy-D-xylulose-5-phosphate synthase.